We begin with the raw amino-acid sequence, 341 residues long: Glucokinase (341 aa).

18 to 23 (GDIGGT) provides a ligand contact to ATP.

It belongs to the bacterial glucokinase family.

The protein resides in the cytoplasm. The enzyme catalyses D-glucose + ATP = D-glucose 6-phosphate + ADP + H(+). In Rhizobium etli (strain ATCC 51251 / DSM 11541 / JCM 21823 / NBRC 15573 / CFN 42), this protein is Glucokinase.